The following is a 1051-amino-acid chain: Leucine zipper protein 1 (1051 aa).

N-acetylalanine is present on alanine 2. Residues 11 to 354 (ASNRHLRFKL…KLQVKKQKEL (344 aa)) are a coiled coil. Disordered regions lie at residues 247-293 (ISST…KDLN), 374-401 (RTKL…HKRE), 432-554 (AAKA…SQVT), and 569-601 (ASSQ…SKAP). Residues 254 to 293 (KESRRKGSLDYLKQVENETRDKSENEKNRNQEDNKVKDLN) are compositionally biased toward basic and acidic residues. Residues serine 256, serine 261, serine 395, serine 513, serine 571, serine 575, serine 612, and serine 660 each carry the phosphoserine modification. Polar residues predominate over residues 569–578 (ASSQRASSEG). A disordered region spans residues 675-727 (VNTTITPEPEPKLQPNSREKVKSRGGTRTPLFENDKNAAVENDSAKSMRSSSN). Position 680 is a phosphothreonine (threonine 680). Phosphoserine is present on serine 691. Basic and acidic residues predominate over residues 707–720 (ENDKNAAVENDSAK). Serine 746 carries the post-translational modification Phosphoserine. Residues 789 to 799 (VTSKVTSSITI) are compositionally biased toward low complexity. The disordered stretch occupies residues 789 to 837 (VTSKVTSSITIYPSDSSGPRAVPTEAPRERHTSTSNIQVGPPELTSVSN). Residues 834–884 (SVSNHISSPLELSIHKHDITLQLTEAERVGDGSPKNRAETVVSRSSILIKP) form a required for interaction with FLNA region. Serine 906 bears the Phosphoserine mark. Over residues 929–938 (RDLKCSEDPP) the composition is skewed to basic and acidic residues. Residues 929–1000 (RDLKCSEDPP…TQSSLTASEV (72 aa)) form a disordered region. Polar residues-rich tracts occupy residues 946–958 (EATN…SSTD) and 989–999 (RRTQSSLTASE). Residue threonine 957 is modified to Phosphothreonine. Phosphoserine is present on serine 993.

In terms of assembly, component of the CERF-1 ISWI chromatin remodeling complex (also called the CECR2-containing remodeling factor (CERF) complex) at least composed of CECR2 and SMARCA1. Component of the CERF-5 ISWI chromatin remodeling complex at least composed of CECR2 and SMARCA5/SNF2H. LUZP1 is detected as part of the CERF-1 and CERF-5 complexes in embryonic stem (ES) cells where it is involved in complex stabilization but is not detected in the complexes in the testis. Interacts (via C-terminus) with LIMA1/EPLIN; both proteins restrict ciliation and may work together to regulate this process. Interacts with myosin light chain MYL9; the interaction results in inhibition of phosphorylation of MYL9 by DAPK3. Interacts with DAPK3; the interaction is likely to occur throughout the cell cycle and reduces the LUZP1-mediated suppression of MYL9 phosphorylation. Interacts with the chromosomal passenger complex (CPC); CPC kinase activity is required for localization of LUZP1 to the centromere. In terms of tissue distribution, expressed in cerebral cortex, cerebellum, hippocampus and brain stem.

The protein localises to the cytoplasm. It localises to the cytoskeleton. The protein resides in the microtubule organizing center. Its subcellular location is the centrosome. It is found in the cilium basal body. The protein localises to the midbody. It localises to the chromosome. The protein resides in the centromere. Its subcellular location is the spindle. It is found in the stress fiber. The protein localises to the nucleus. It localises to the cell projection. The protein resides in the dendrite. Its subcellular location is the perikaryon. It is found in the cell junction. The protein localises to the tight junction. In terms of biological role, F-actin cross-linking protein. Stabilizes actin and acts as a negative regulator of primary cilium formation. Positively regulates the phosphorylation of both myosin II and protein phosphatase 1 regulatory subunit PPP1R12A/MYPT1 and promotes the assembly of myosin II stacks within actin stress fibers. Inhibits the phosphorylation of myosin light chain MYL9 by DAPK3 and suppresses the constriction velocity of the contractile ring during cytokinesis. Binds to microtubules and promotes epithelial cell apical constriction by up-regulating levels of diphosphorylated myosin light chain (MLC) through microtubule-dependent inhibition of MLC dephosphorylation by myosin phosphatase. Involved in regulation of cell migration, nuclear size and centriole number, probably through regulation of the actin cytoskeleton. Component of the CERF-1 and CERF-5 chromatin remodeling complexes in embryonic stem cells where it acts to stabilize the complexes. Plays a role in embryonic brain and cardiovascular development. This Rattus norvegicus (Rat) protein is Leucine zipper protein 1 (Luzp1).